A 200-amino-acid polypeptide reads, in one-letter code: dTTP/UTP pyrophosphatase (200 aa).

The active-site Proton acceptor is aspartate 81.

This sequence belongs to the Maf family. YhdE subfamily. A divalent metal cation is required as a cofactor.

It localises to the cytoplasm. It carries out the reaction dTTP + H2O = dTMP + diphosphate + H(+). The catalysed reaction is UTP + H2O = UMP + diphosphate + H(+). Functionally, nucleoside triphosphate pyrophosphatase that hydrolyzes dTTP and UTP. May have a dual role in cell division arrest and in preventing the incorporation of modified nucleotides into cellular nucleic acids. This chain is dTTP/UTP pyrophosphatase, found in Cupriavidus metallidurans (strain ATCC 43123 / DSM 2839 / NBRC 102507 / CH34) (Ralstonia metallidurans).